The sequence spans 190 residues: Xanthine phosphoribosyltransferase (190 aa).

Xanthine is bound by residues leucine 20 and asparagine 27. Position 128–132 (128–132 (ANGKA)) interacts with 5-phospho-alpha-D-ribose 1-diphosphate. Lysine 156 is a binding site for xanthine.

It belongs to the purine/pyrimidine phosphoribosyltransferase family. Xpt subfamily. In terms of assembly, homodimer.

The protein resides in the cytoplasm. The enzyme catalyses XMP + diphosphate = xanthine + 5-phospho-alpha-D-ribose 1-diphosphate. It participates in purine metabolism; XMP biosynthesis via salvage pathway; XMP from xanthine: step 1/1. Its function is as follows. Converts the preformed base xanthine, a product of nucleic acid breakdown, to xanthosine 5'-monophosphate (XMP), so it can be reused for RNA or DNA synthesis. The sequence is that of Xanthine phosphoribosyltransferase from Pseudomonas entomophila (strain L48).